The sequence spans 504 residues: Cytochrome P450 2D1 (504 aa).

C446 serves as a coordination point for heme.

Belongs to the cytochrome P450 family. Requires heme as cofactor.

It is found in the endoplasmic reticulum membrane. It localises to the microsome membrane. The catalysed reaction is an organic molecule + reduced [NADPH--hemoprotein reductase] + O2 = an alcohol + oxidized [NADPH--hemoprotein reductase] + H2O + H(+). In terms of biological role, cytochromes P450 are a group of heme-thiolate monooxygenases. In liver microsomes, this enzyme is involved in an NADPH-dependent electron transport pathway. It oxidizes a variety of structurally unrelated compounds, including steroids, fatty acids, and xenobiotics. This is Cytochrome P450 2D1 (Cyp2d1) from Rattus norvegicus (Rat).